The sequence spans 82 residues: MANSNNKTNAQQVRKQNQQSASGQGQFGTEFASETNVQQVRKQNQQSAAGQGQFGTEFASETDAQQVRQQNQSAEQNKQQNS.

Composition is skewed to polar residues over residues 1–24 and 32–50; these read MANSNNKTNAQQVRKQNQQSASGQ and ASETNVQQVRKQNQQSAAG. The interval 1–82 is disordered; the sequence is MANSNNKTNA…SAEQNKQQNS (82 aa). 2 consecutive repeats follow at residues 19 to 45 and 46 to 72; these read QSASGQGQFGTEFASETNVQQVRKQNQ and QSAAGQGQFGTEFASETDAQQVRQQNQ. The segment covering 69–82 has biased composition (low complexity); sequence QQNQSAEQNKQQNS.

Belongs to the gamma-type SASP family.

Its function is as follows. SASP are bound to spore DNA. They are double-stranded DNA-binding proteins that cause DNA to change to an a-like conformation. They protect the DNA backbone from chemical and enzymatic cleavage and are thus involved in dormant spore's high resistance to UV light. This Bacillus subtilis protein is Small, acid-soluble spore protein gamma-type.